The sequence spans 469 residues: 3-isopropylmalate dehydratase large subunit (469 aa).

[4Fe-4S] cluster contacts are provided by Cys347, Cys410, and Cys413.

Belongs to the aconitase/IPM isomerase family. LeuC type 1 subfamily. Heterodimer of LeuC and LeuD. [4Fe-4S] cluster serves as cofactor.

It catalyses the reaction (2R,3S)-3-isopropylmalate = (2S)-2-isopropylmalate. Its pathway is amino-acid biosynthesis; L-leucine biosynthesis; L-leucine from 3-methyl-2-oxobutanoate: step 2/4. Functionally, catalyzes the isomerization between 2-isopropylmalate and 3-isopropylmalate, via the formation of 2-isopropylmaleate. This is 3-isopropylmalate dehydratase large subunit from Burkholderia lata (strain ATCC 17760 / DSM 23089 / LMG 22485 / NCIMB 9086 / R18194 / 383).